A 210-amino-acid polypeptide reads, in one-letter code: Uridine kinase (210 aa).

13-20 (GGSGSGKT) contacts ATP.

This sequence belongs to the uridine kinase family.

Its subcellular location is the cytoplasm. It catalyses the reaction uridine + ATP = UMP + ADP + H(+). It carries out the reaction cytidine + ATP = CMP + ADP + H(+). The protein operates within pyrimidine metabolism; CTP biosynthesis via salvage pathway; CTP from cytidine: step 1/3. Its pathway is pyrimidine metabolism; UMP biosynthesis via salvage pathway; UMP from uridine: step 1/1. This chain is Uridine kinase, found in Oceanobacillus iheyensis (strain DSM 14371 / CIP 107618 / JCM 11309 / KCTC 3954 / HTE831).